An 86-amino-acid chain; its full sequence is MHQRCFGLRASLSIFKAFAVTLAASVFLQVVYFLSLLFMSFRPTRESDRSIHSGTRQADQPQKRDRDKTEQSNVPKLDPRRKRRTP.

A helical membrane pass occupies residues 18–38 (FAVTLAASVFLQVVYFLSLLF). The disordered stretch occupies residues 44–86 (TRESDRSIHSGTRQADQPQKRDRDKTEQSNVPKLDPRRKRRTP). Residues 61–70 (PQKRDRDKTE) are compositionally biased toward basic and acidic residues.

The protein resides in the cell membrane. Its pathway is glycan metabolism; exopolysaccharide biosynthesis. In terms of biological role, inhibition of exopolysaccharide synthesis (EPS) and nodulation ability (NOD). The protein is Exopolysaccharide production repressor protein (exoX) of Rhizobium leguminosarum bv. phaseoli.